Consider the following 259-residue polypeptide: DNA repair protein RecO (259 aa).

It belongs to the RecO family.

In terms of biological role, involved in DNA repair and RecF pathway recombination. The sequence is that of DNA repair protein RecO from Chloroherpeton thalassium (strain ATCC 35110 / GB-78).